The primary structure comprises 198 residues: Nucleoid occlusion factor SlmA (198 aa).

Positions 10–70 (NRREEILQSL…SLIEFIEDSL (61 aa)) constitute an HTH tetR-type domain. The H-T-H motif DNA-binding region spans 33–52 (TTAKLAASVGVSEAALYRHF). Residues 117-144 (EQDRLQGRINQLFERIEAQLRQVLREKR) are a coiled coil.

This sequence belongs to the nucleoid occlusion factor SlmA family. In terms of assembly, homodimer. Interacts with FtsZ.

It is found in the cytoplasm. The protein resides in the nucleoid. Required for nucleoid occlusion (NO) phenomenon, which prevents Z-ring formation and cell division over the nucleoid. Acts as a DNA-associated cell division inhibitor that binds simultaneously chromosomal DNA and FtsZ, and disrupts the assembly of FtsZ polymers. SlmA-DNA-binding sequences (SBS) are dispersed on non-Ter regions of the chromosome, preventing FtsZ polymerization at these regions. This Citrobacter koseri (strain ATCC BAA-895 / CDC 4225-83 / SGSC4696) protein is Nucleoid occlusion factor SlmA.